Consider the following 126-residue polypeptide: Glycine cleavage system H protein (126 aa).

The Lipoyl-binding domain maps to 22-104 (TVTIGITEYA…YEKAWMVKVK (83 aa)). Lysine 63 is modified (N6-lipoyllysine).

It belongs to the GcvH family. As to quaternary structure, the glycine cleavage system is composed of four proteins: P, T, L and H. (R)-lipoate serves as cofactor.

In terms of biological role, the glycine cleavage system catalyzes the degradation of glycine. The H protein shuttles the methylamine group of glycine from the P protein to the T protein. Its function is as follows. Is also involved in protein lipoylation via its role as an octanoyl/lipoyl carrier protein intermediate. The protein is Glycine cleavage system H protein of Staphylococcus carnosus (strain TM300).